Consider the following 359-residue polypeptide: F-box protein At5g49610 (359 aa).

Residues 3–52 (NQKGALFPDEVILQILARLPVKSLFRFKSVCKSWYRLPSDKYFTSLFNQL) enclose the F-box domain.

Part of a SCF (SKP1-cullin-F-box) protein ligase complex. Interacts with SKP1A, SKP1B, ASK11, ASK12, ASK13 and ASK14.

It participates in protein modification; protein ubiquitination. The protein is F-box protein At5g49610 of Arabidopsis thaliana (Mouse-ear cress).